The sequence spans 736 residues: 1,4-alpha-glucan branching enzyme GlgB (736 aa).

The active-site Nucleophile is Asp415. The Proton donor role is filled by Glu470.

The protein belongs to the glycosyl hydrolase 13 family. GlgB subfamily. Monomer.

The catalysed reaction is Transfers a segment of a (1-&gt;4)-alpha-D-glucan chain to a primary hydroxy group in a similar glucan chain.. Its pathway is glycan biosynthesis; glycogen biosynthesis. Functionally, catalyzes the formation of the alpha-1,6-glucosidic linkages in glycogen by scission of a 1,4-alpha-linked oligosaccharide from growing alpha-1,4-glucan chains and the subsequent attachment of the oligosaccharide to the alpha-1,6 position. The sequence is that of 1,4-alpha-glucan branching enzyme GlgB from Paraburkholderia xenovorans (strain LB400).